The following is a 153-amino-acid chain: Histone H2B type W-T (153 aa).

The interval 1–54 (MATASAMAGPSSETTSEEQLITQEPKEANSTTSQKQSKQRKRGRHGPRRCHSNC) is disordered. Residues 11–36 (SSETTSEEQLITQEPKEANSTTSQKQ) are compositionally biased toward polar residues. Positions 37–52 (SKQRKRGRHGPRRCHS) are enriched in basic residues.

It belongs to the histone H2B family. Can replace the conventional histone H2B in the nucleosome. The nucleosome is a histone octamer containing two molecules each of H2A, H2B, H3 and H4 assembled in one H3-H4 heterotetramer and two H2A-H2B heterodimers. The octamer wraps approximately 147 bp of DNA. As to expression, testis-specific (at protein level).

Its subcellular location is the nucleus membrane. It is found in the chromosome. The protein localises to the telomere. In terms of biological role, atypical histone H2B that can form nucleosomes structurally and dynamically indistinguishable from those containing conventional H2B. Nucleosomes wrap and compact DNA into chromatin, limiting DNA accessibility to the cellular machineries which require DNA as a template. Histones thereby play a central role in transcription regulation, DNA repair, DNA replication and chromosomal stability. DNA accessibility is regulated via a complex set of post-translational modifications of histones, also called histone code, and nucleosome remodeling. However, unlike conventional H2B, does not recruit chromosome condensation factors and does not participate in the assembly of mitotic chromosomes. May be important for telomere function and play a role in spermatogenesis. This Homo sapiens (Human) protein is Histone H2B type W-T.